The sequence spans 483 residues: MSIRVTQKSYKVSTSGPRAFSSRSYTSGPGSRISSSSFSRVGSSNFRGGLGGGYGGASGMGGITAVTVNQSLLSPLVLEVDPNIQAVRTQEKEQIKTLNNKFASFIDKVRFLEQQNKMLETKWSLLQQQKTARSNMDNMFESYINNLRRQLETLGQEKLKLEAELGNMQGLVEDFKNKYEDEINKRTEMENEFVLIKKDVDEAYMNKVELESRLEGLTDEINFLRQLYEEEIRELQSQISDTSVVLSMDNSRSLDMDSIIAEVKAQYEDIANRSRAEAESMYQIKYEELQSLAGKHGDDLRRTKTEISEMNRNISRLQAEIEGLKGQRASLEAAIADAEQRGELAIKDANAKLSELEAALQRAKQDMARQLREYQELMNVKLALDIEIATYRKLLEGEESRLESGMQNMSIHTKTTSGYAGGLSSAYGGLTSPGLSYSLGSSFGSGAGSSSFSRTSSSRAVVVKKIETRDGKLVSESSDVLPK.

Polar residues predominate over residues 1 to 16 (MSIRVTQKSYKVSTSG). Residues 1 to 41 (MSIRVTQKSYKVSTSGPRAFSSRSYTSGPGSRISSSSFSRV) are disordered. A head region spans residues 1 to 90 (MSIRVTQKSY…DPNIQAVRTQ (90 aa)). At S9 the chain carries Phosphoserine; by PKC/PRKCE. A Glycyl lysine isopeptide (Lys-Gly) (interchain with G-Cter in SUMO2) cross-link involves residue K11. 4 positions are modified to phosphoserine: S13, S15, S21, and S22. R23 carries the post-translational modification Omega-N-methylarginine. S24 is subject to Phosphoserine; by PKC/PRKCE. Low complexity predominate over residues 24-41 (SYTSGPGSRISSSSFSRV). T26 is subject to Phosphothreonine. A phosphoserine mark is found at S27 and S31. R32 bears the Omega-N-methylarginine mark. Phosphoserine is present on residues S34, S37, and S39. Residue R40 is modified to Omega-N-methylarginine. 2 positions are modified to phosphoserine: S43 and S44. Residue R47 is modified to Asymmetric dimethylarginine; alternate. At R47 the chain carries Omega-N-methylarginine; alternate. Phosphoserine; by MAPK is present on S74. The coil 1A stretch occupies residues 91–126 (EKEQIKTLNNKFASFIDKVRFLEQQNKMLETKWSLL). Residues 91–402 (EKEQIKTLNN…KLLEGEESRL (312 aa)) enclose the IF rod domain. K101 carries the post-translational modification N6-malonyllysine. Residues K122 and K130 each participate in a glycyl lysine isopeptide (Lys-Gly) (interchain with G-Cter in SUMO2) cross-link. Residues 127 to 143 (QQQKTARSNMDNMFESY) form a linker 1 region. A coil 1B region spans residues 144–235 (INNLRRQLET…QLYEEEIREL (92 aa)). Residue K197 forms a Glycyl lysine isopeptide (Lys-Gly) (interchain with G-Cter in SUMO1); alternate linkage. A Glycyl lysine isopeptide (Lys-Gly) (interchain with G-Cter in SUMO2); alternate cross-link involves residue K197. Residue K207 is modified to N6-acetyllysine. Y228 carries the phosphotyrosine modification. The tract at residues 236 to 259 (QSQISDTSVVLSMDNSRSLDMDSI) is linker 12. 2 positions are modified to phosphoserine: S253 and S258. Residues 260-398 (IAEVKAQYED…ATYRKLLEGE (139 aa)) form a coil 2 region. Positions 261–382 (AEVKAQYEDI…EYQELMNVKL (122 aa)) are necessary for interaction with PNN. A Glycyl lysine isopeptide (Lys-Gly) (interchain with G-Cter in SUMO2) cross-link involves residue K264. A Phosphoserine modification is found at S274. K285 participates in a covalent cross-link: Glycyl lysine isopeptide (Lys-Gly) (interchain with G-Cter in SUMO2). S291 carries the post-translational modification Phosphoserine. Residue K295 forms a Glycyl lysine isopeptide (Lys-Gly) (interchain with G-Cter in SUMO2); alternate linkage. K295 is modified (N6-acetyllysine; alternate). K304 is covalently cross-linked (Glycyl lysine isopeptide (Lys-Gly) (interchain with G-Cter in SUMO2)). K325 participates in a covalent cross-link: Glycyl lysine isopeptide (Lys-Gly) (interchain with G-Cter in SUMO2); alternate. An N6-acetyllysine; alternate modification is found at K325. At S330 the chain carries Phosphoserine. Residue K393 forms a Glycyl lysine isopeptide (Lys-Gly) (interchain with G-Cter in SUMO2) linkage. Positions 399-483 (ESRLESGMQN…VSESSDVLPK (85 aa)) are tail. Phosphoserine is present on residues S400, S404, S410, S417, and S424. S432 is subject to Phosphoserine; by CaMK2 and MAPK. Residue K472 forms a Glycyl lysine isopeptide (Lys-Gly) (interchain with G-Cter in SUMO1); alternate linkage. A Glycyl lysine isopeptide (Lys-Gly) (interchain with G-Cter in SUMO2); alternate cross-link involves residue K472. S475, S477, and S478 each carry phosphoserine.

It belongs to the intermediate filament family. Heterotetramer of two type I and two type II keratins. Forms a heterodimer with KRT18. Associates with KRT20. Interacts with PLEC isoform 1C, when in a heterodimer with KRT18. Interacts with PNN. When associated with KRT19, interacts with DMD. Interacts with TCHP. Interacts with APEX1. Interacts with GPER1. Interacts with EPPK1. Interacts with PKP1 and PKP2. As to quaternary structure, (Microbial infection) Interacts with hepatitis C virus/HCV core protein. Phosphorylation on serine residues is enhanced during EGF stimulation and mitosis. Ser-74 phosphorylation plays an important role in keratin filament reorganization. In terms of processing, O-glycosylated. O-GlcNAcylation at multiple sites increases solubility, and decreases stability by inducing proteasomal degradation. Post-translationally, O-glycosylated (O-GlcNAcylated), in a cell cycle-dependent manner. Observed in muscle fibers accumulating in the costameres of myoplasm at the sarcolemma membrane in structures that contain dystrophin and spectrin. Expressed in gingival mucosa and hard palate of the oral cavity.

Its subcellular location is the cytoplasm. It is found in the nucleus. It localises to the nucleoplasm. The protein localises to the nucleus matrix. In terms of biological role, together with KRT19, helps to link the contractile apparatus to dystrophin at the costameres of striated muscle. The chain is Keratin, type II cytoskeletal 8 (KRT8) from Homo sapiens (Human).